Consider the following 172-residue polypeptide: 3-hydroxydecanoyl-[acyl-carrier-protein] dehydratase (172 aa).

The active site involves His71.

Belongs to the thioester dehydratase family. FabA subfamily. Homodimer.

It localises to the cytoplasm. It catalyses the reaction a (3R)-hydroxyacyl-[ACP] = a (2E)-enoyl-[ACP] + H2O. The catalysed reaction is (3R)-hydroxydecanoyl-[ACP] = (2E)-decenoyl-[ACP] + H2O. The enzyme catalyses (2E)-decenoyl-[ACP] = (3Z)-decenoyl-[ACP]. Its pathway is lipid metabolism; fatty acid biosynthesis. Necessary for the introduction of cis unsaturation into fatty acids. Catalyzes the dehydration of (3R)-3-hydroxydecanoyl-ACP to E-(2)-decenoyl-ACP and then its isomerization to Z-(3)-decenoyl-ACP. Can catalyze the dehydratase reaction for beta-hydroxyacyl-ACPs with saturated chain lengths up to 16:0, being most active on intermediate chain length. The sequence is that of 3-hydroxydecanoyl-[acyl-carrier-protein] dehydratase from Pectobacterium atrosepticum (strain SCRI 1043 / ATCC BAA-672) (Erwinia carotovora subsp. atroseptica).